The sequence spans 162 residues: uncharacterized protein (162 aa).

Residues 1–49 form a disordered region; the sequence is MNSRTASARGWFSSRPPTSESDLEPATDGPASETTTLSPEATTFNDTRI. Over residues 32–46 the composition is skewed to polar residues; sequence SETTTLSPEATTFND. A helical membrane pass occupies residues 62-82; it reads MLLSFGIITVIGLAVALVLYI.

The protein resides in the membrane. This is an uncharacterized protein from Homo sapiens (Human).